A 417-amino-acid chain; its full sequence is Sulfate adenylyltransferase (417 aa).

Residues 1–10 (MTSITANQKP) show a composition bias toward polar residues. Residues 1 to 20 (MTSITANQKPSKLVPPHGSP) are disordered.

The protein belongs to the sulfate adenylyltransferase family.

The enzyme catalyses sulfate + ATP + H(+) = adenosine 5'-phosphosulfate + diphosphate. It participates in sulfur metabolism; hydrogen sulfide biosynthesis; sulfite from sulfate: step 1/3. In Psychrobacter arcticus (strain DSM 17307 / VKM B-2377 / 273-4), this protein is Sulfate adenylyltransferase.